We begin with the raw amino-acid sequence, 195 residues long: Transcriptional regulator LdrP (195 aa).

An HTH crp-type domain is found at 110–182 (GELRARIARY…YRRVYLLDLA (73 aa)). The H-T-H motif DNA-binding region spans 142–161 (HEEIADATASIRESVSKVLA).

Activates transcription. Positively regulates PcrtB promoter upstream of the crtB operon in a cAMP-independent manner. Regulated genes include genes encoding DNA photolyase, phytoene synthase and cytochrome P450 monooxygenase, which are involved in carotenoid biosynthesis. Positively regulates the light-inducible gene cluster in the megaplasmid in a cAMP-independent manner. In Thermus thermophilus (strain ATCC BAA-163 / DSM 7039 / HB27), this protein is Transcriptional regulator LdrP.